The following is an 868-amino-acid chain: Dolichyl-phosphooligosaccharide-protein glycotransferase 3 (868 aa).

Over 1 to 16 (MQNAESWFKKYWHLSV) the chain is Cytoplasmic. The chain crosses the membrane as a helical span at residues 17-36 (LVIAALISVKLRILNPWNSV). Residues 37–101 (FTWTVRLGGN…IAGIIFSATS (65 aa)) lie on the Extracellular side of the membrane. The short motif at 45-47 (GND) is the DXD motif 1 element. Asp47 provides a ligand contact to Mn(2+). Residue His81 coordinates a glycophospholipid. Residues 102 to 131 (GESLRAVLAFIPAIGGVLAILPVYLLTREV) traverse the membrane as a helical segment. Residues 132–133 (FD) are Cytoplasmic-facing. Residues 134 to 153 (KRAAVIAAFLIAIVPGQFLQ) form a helical membrane-spanning segment. At 154–162 (RSILGFNDH) the chain is on the extracellular side. Asp161 provides a ligand contact to Mn(2+). The DXD motif 2 motif lies at 161–163 (DHH). His162 lines the a glycophospholipid pocket. His163 lines the Mn(2+) pocket. Residues 163–184 (HIWEAFWQVSALGTFLLAYNRW) traverse the membrane as a helical segment. The Cytoplasmic portion of the chain corresponds to 185-199 (KGHDLSHNLTARQMA). Residues 200 to 212 (YPVIAGITIGLYV) form a helical membrane-spanning segment. The Extracellular segment spans residues 213-215 (LSW). A helical transmembrane segment spans residues 216–238 (GAGFIIAPIILAFMFFAFVLAGF). The Cytoplasmic segment spans residues 239 to 241 (VNA). Residues 242–262 (DRKNLSLVAVVTFAVSALIYL) traverse the membrane as a helical segment. Residues 263–279 (PFAFNYPGFSTIFYSPF) lie on the Extracellular side of the membrane. A helical membrane pass occupies residues 280 to 303 (QLLVLLGSAVIAAAFYQIEKWNDV). At 304 to 312 (GFFERVGLG) the chain is on the cytoplasmic side. Residues 313-330 (RKGMPLAVIVLTALIMGL) form a helical membrane-spanning segment. Over 331–373 (FFVISPDFARNLLSVVRVVQPKGGALTIAEVYPFFFTHNGEFT) the chain is Extracellular. Residues 357–360 (TIAE) carry the TIXE motif motif. A helical transmembrane segment spans residues 374-396 (LTNAVLHFGALFFFGMAGILYSA). Topologically, residues 397 to 404 (YRFLKRRS) are cytoplasmic. The helical transmembrane segment at 405 to 423 (FPEMALLIWAIAMFIALWG) threads the bilayer. Residues 424–427 (QNRF) lie on the Extracellular side of the membrane. Arg426 lines the a glycophospholipid pocket. A helical membrane pass occupies residues 428–452 (AYYFAAVSAVYSALALSVVFDKLHL). Residues 453 to 468 (YRALENAIGARNKLSY) are Cytoplasmic-facing. A helical membrane pass occupies residues 469-494 (FRVAFALLIALAAIYPTYILADAQSS). Residues 495–868 (YAGGPNKQWY…QNGEIIQLDL (374 aa)) are Extracellular-facing. The segment at 550–552 (WWD) is interacts with target acceptor peptide in protein substrate. The WWDYG motif motif lies at 550–554 (WWDYG). The DKi motif motif lies at 613 to 622 (EMETGKYYAM).

Belongs to the STT3 family. Requires Mg(2+) as cofactor. Mn(2+) serves as cofactor. Zn(2+) is required as a cofactor.

Its subcellular location is the cell membrane. The catalysed reaction is an archaeal dolichyl phosphooligosaccharide + [protein]-L-asparagine = an archaeal dolichyl phosphate + a glycoprotein with the oligosaccharide chain attached by N-beta-D-glycosyl linkage to a protein L-asparagine.. It participates in protein modification; protein glycosylation. Oligosaccharyl transferase (OST) that catalyzes the initial transfer of a defined glycan (a glucose-linked heptasaccharide composed of 3 Glc, 2 Man, 2 Gal and a sulfate for A.fulgidus AglB-L) from the lipid carrier dolichol-monophosphate to an asparagine residue within an Asn-X-Ser/Thr consensus motif in nascent polypeptide chains, the first step in protein N-glycosylation. The protein is Dolichyl-phosphooligosaccharide-protein glycotransferase 3 (aglB3) of Archaeoglobus fulgidus (strain ATCC 49558 / DSM 4304 / JCM 9628 / NBRC 100126 / VC-16).